Reading from the N-terminus, the 1000-residue chain is Putative methyl-accepting chemotaxis protein sll0041 (1000 aa).

The disordered stretch occupies residues methionine 1–valine 59. GAF domains follow at residues glutamate 342 to leucine 478 and asparagine 509 to leucine 650. The 52-residue stretch at glutamate 671 to threonine 722 folds into the HAMP domain. The Methyl-accepting transducer domain occupies alanine 727 to alanine 963.

Belongs to the methyl-accepting chemotaxis (MCP) protein family.

This chain is Putative methyl-accepting chemotaxis protein sll0041, found in Synechocystis sp. (strain ATCC 27184 / PCC 6803 / Kazusa).